Consider the following 784-residue polypeptide: SWI/SNF complex subunit SWI3C homolog (784 aa).

The segment covering 1 to 10 (MPRKASSTSD) has biased composition (polar residues). The tract at residues 1–68 (MPRKASSTSD…PEDADDETLA (68 aa)) is disordered. Residues 24–39 (ASPSPSNRSSAAAAAA) show a composition bias toward low complexity. The segment covering 43 to 66 (DDSDSAAVNEDDDSAVPEDADDET) has biased composition (acidic residues). One can recognise an SWIRM domain in the interval 185–284 (HVVPKHSDWF…YLASGSVHRG (100 aa)). A ZZ-type; degenerate zinc finger spans residues 355–409 (LSESSCSYCLQPLTSLHYQSLKEADIALCSDCFHDARYITGHSSLDFQRIDGDND). Cysteine 360, cysteine 363, cysteine 383, and cysteine 386 together coordinate Zn(2+). Residues 413 to 464 (NDGDSWTDQETLLLLEGIEKYNDNWNNIAEHVGTKSKAQCIYHFIRLPVEDG) enclose the SANT domain. Disordered regions lie at residues 667-702 (LASPGNSLPGGSTSTMSSNPMSMSPRPMGVPGSMPQ) and 760-784 (GMPNSVTPNHHQLLRSSSGNNSSVG). Positions 675 to 695 (PGGSTSTMSSNPMSMSPRPMG) are enriched in low complexity.

In terms of assembly, interacts with LFR. Interacts with NMCP1.

The protein localises to the nucleus. It is found in the nucleoplasm. Functionally, component of a multiprotein complex equivalent of the SWI/SNF complex, an ATP-dependent chromatin-remodeling complex, which is required for the positive and negative regulation of gene expression of a large number of genes. It changes chromatin structure by altering DNA-histone contacts within a nucleosome, leading eventually to a change in nucleosome position, thus facilitating or repressing binding of gene-specific transcription factors. May be involved in positive response to drought stress and modulation of root growth through its interaction with NMCP1. This Oryza sativa subsp. japonica (Rice) protein is SWI/SNF complex subunit SWI3C homolog.